We begin with the raw amino-acid sequence, 758 residues long: Meiotic driver SPOK4 (758 aa).

Residues 4–41 (KDRITQLLRKLEEAKAREEEAKAREAQERCEKERLQLE) adopt a coiled-coil conformation. Disordered stretches follow at residues 180–230 (ELTQ…GVGI) and 414–499 (LSSA…MADP). The segment covering 181-190 (LTQEDDRSSG) has biased composition (basic and acidic residues). Over residues 416–429 (SAASSQNTENSEYT) the composition is skewed to polar residues. Residues 457–468 (NEHDEHDEDHSE) are compositionally biased toward basic and acidic residues.

Its subcellular location is the cytoplasm. It is found in the nucleus. Functionally, promotes unequal transmission of alleles from the parental zygote to progeny spores by acting as poison/antidote system, leading to poisoning of progeny that do not inherit the allele. May possess DNA nuclease activity that leads to spore killing, and a kinase activity that confers resistance to the nuclease activity. Can suppress meiotic drive by the P.comata SPOK1 protein. The sequence is that of Meiotic driver SPOK4 from Podospora anserina (Pleurage anserina).